A 328-amino-acid polypeptide reads, in one-letter code: MTEEKAEEKNKMASVFLPALGGVAVCGGTHGNELSGVYLVQEMERQRKERGDGVWPIPVTTVLSNPRAVKECRRYIDTDMNRCFSKAVLSTPITDSSPYEVRRAQELNNLLGVKGSDDVMDMICDLHNTTSNMGLTLIHYSASDWVTLHICKYLQTKITKVPVRVLVLDFPINDAYNLESVSKHGFTLEVGPQPQGVVRADIYVIMKEAVDLTIDWIHKFNSGTVFEGGDVEVFKFIKSVDYPRDPETRNLTAAVHPQLQDRDFCLLKRGDPLFLSFSGETVTCEEEEPLHPFFINEGAYYEKGIAFHLAKKWTLTVPSVQVQTTNSA.

Zn(2+) contacts are provided by His30 and Glu33. Substrate is bound by residues Arg74 and 81–82 (NR). His127 is a Zn(2+) binding site. Residues Glu189 and Tyr300 each coordinate substrate.

Belongs to the AspA/AstE family. Aspartoacylase subfamily. Homotetramer. It depends on Zn(2+) as a cofactor.

It localises to the apical cell membrane. The protein localises to the cytoplasm. It catalyses the reaction an N-acyl-aromatic L-alpha-amino acid + H2O = an aromatic L-alpha-amino acid + a carboxylate. The enzyme catalyses an N-acetyl-L-cysteine-S-conjugate + H2O = an S-substituted L-cysteine + acetate. Plays an important role in deacetylating mercapturic acids in kidney proximal tubules. This is N-acyl-aromatic-L-amino acid amidohydrolase (carboxylate-forming) A (acy3.1) from Danio rerio (Zebrafish).